A 431-amino-acid chain; its full sequence is Maintenance of mitochondrial morphology protein 1 (431 aa).

Topologically, residues 1–103 are lumenal; that stretch reads MVSALEVKSI…QLISWSFAQG (103 aa). Residues 104 to 124 traverse the membrane as a helical segment; it reads LIIGQLSVVIFLIFFVKFFIF. The Cytoplasmic segment spans residues 125–431; that stretch reads TDASSKMDNP…EDESSKTPHS (307 aa). Residues 192-404 form the SMP-LTD domain; it reads SAESLDWFNV…EPRFQSVKLP (213 aa). Residues 412-431 are disordered; the sequence is NTREEVIHKTEDESSKTPHS.

The protein belongs to the MMM1 family. In terms of assembly, homodimer. Component of the ER-mitochondria encounter structure (ERMES) or MDM complex, composed of MMM1, MDM10, MDM12 and MDM34. An MMM1 homodimer associates with one molecule of MDM12 on each side in a pairwise head-to-tail manner, and the SMP-LTD domains of MMM1 and MDM12 generate a continuous hydrophobic tunnel for phospholipid trafficking.

The protein resides in the endoplasmic reticulum membrane. In terms of biological role, component of the ERMES/MDM complex, which serves as a molecular tether to connect the endoplasmic reticulum (ER) and mitochondria. Components of this complex are involved in the control of mitochondrial shape and protein biogenesis, and function in nonvesicular lipid trafficking between the ER and mitochondria. The MDM12-MMM1 subcomplex functions in the major beta-barrel assembly pathway that is responsible for biogenesis of all outer membrane beta-barrel proteins, and acts in a late step after the SAM complex. The MDM10-MDM12-MMM1 subcomplex further acts in the TOM40-specific pathway after the action of the MDM12-MMM1 complex. Essential for establishing and maintaining the structure of mitochondria and maintenance of mtDNA nucleoids. In Candida glabrata (strain ATCC 2001 / BCRC 20586 / JCM 3761 / NBRC 0622 / NRRL Y-65 / CBS 138) (Yeast), this protein is Maintenance of mitochondrial morphology protein 1.